We begin with the raw amino-acid sequence, 453 residues long: Nuclear distribution protein nudF-2 (453 aa).

One can recognise a LisH domain in the interval 9 to 41 (QADELHRALIAYLTAANLPNTAAALREELNLSE). Residues 62 to 88 (SVVRLQKKIMDLESRNHILQSELDNAT) adopt a coiled-coil conformation. The segment at 84–107 (LDNATPTSRQNKDPVAWLPRAPPR) is disordered. WD repeat units follow at residues 112–153 (SHRD…RTIK), 155–195 (HTKA…KNIR), 199–239 (GHDH…CVKT), 242–281 (GHAE…PEPK), 286–345 (GHEH…IKTL), 347–386 (GHDN…KCVK), and 391–449 (AHGH…LNVR).

It belongs to the WD repeat LIS1/nudF family. Self-associates. Interacts with ro-11/nde1 and dynein.

It localises to the cytoplasm. It is found in the cytoskeleton. The protein resides in the spindle pole. Its function is as follows. Positively regulates the activity of the minus-end directed microtubule motor protein dynein. May enhance dynein-mediated microtubule sliding by targeting dynein to the microtubule plus end. Required for nuclear migration during vegetative growth as well as development. Required for retrograde early endosome (EE) transport from the hyphal tip. Required for localization of dynein to the mitotic spindle poles. Recruits additional proteins to the dynein complex at SPBs. This chain is Nuclear distribution protein nudF-2 (nmp-1), found in Neurospora crassa (strain ATCC 24698 / 74-OR23-1A / CBS 708.71 / DSM 1257 / FGSC 987).